The chain runs to 203 residues: Ribosomal RNA large subunit methyltransferase E (203 aa).

The S-adenosyl-L-methionine site is built by Gly51, Trp53, Asp69, Asp85, and Asp108. The active-site Proton acceptor is the Lys148.

It belongs to the class I-like SAM-binding methyltransferase superfamily. RNA methyltransferase RlmE family.

Its subcellular location is the cytoplasm. The enzyme catalyses uridine(2552) in 23S rRNA + S-adenosyl-L-methionine = 2'-O-methyluridine(2552) in 23S rRNA + S-adenosyl-L-homocysteine + H(+). Specifically methylates the uridine in position 2552 of 23S rRNA at the 2'-O position of the ribose in the fully assembled 50S ribosomal subunit. This Methanocorpusculum labreanum (strain ATCC 43576 / DSM 4855 / Z) protein is Ribosomal RNA large subunit methyltransferase E.